Here is a 389-residue protein sequence, read N- to C-terminus: 8-amino-7-oxononanoate synthase (389 aa).

Arg-18 contacts substrate. 104–105 is a binding site for pyridoxal 5'-phosphate; sequence GY. His-129 contacts substrate. The pyridoxal 5'-phosphate site is built by Ser-176, His-204, and Thr-232. Position 235 is an N6-(pyridoxal phosphate)lysine (Lys-235). Thr-351 lines the substrate pocket.

Belongs to the class-II pyridoxal-phosphate-dependent aminotransferase family. BioF subfamily. In terms of assembly, homodimer. Requires pyridoxal 5'-phosphate as cofactor.

The enzyme catalyses 6-carboxyhexanoyl-[ACP] + L-alanine + H(+) = (8S)-8-amino-7-oxononanoate + holo-[ACP] + CO2. It functions in the pathway cofactor biosynthesis; biotin biosynthesis. Its function is as follows. Catalyzes the decarboxylative condensation of pimeloyl-[acyl-carrier protein] and L-alanine to produce 8-amino-7-oxononanoate (AON), [acyl-carrier protein], and carbon dioxide. This is 8-amino-7-oxononanoate synthase from Citrifermentans bemidjiense (strain ATCC BAA-1014 / DSM 16622 / JCM 12645 / Bem) (Geobacter bemidjiensis).